Consider the following 631-residue polypeptide: tRNA uridine 5-carboxymethylaminomethyl modification enzyme MnmG (631 aa).

14 to 19 (GGGHAG) contacts FAD. 274-288 (GPRYCPSIEDKIHRF) lines the NAD(+) pocket.

Belongs to the MnmG family. In terms of assembly, homodimer. Heterotetramer of two MnmE and two MnmG subunits. FAD serves as cofactor.

The protein resides in the cytoplasm. Its function is as follows. NAD-binding protein involved in the addition of a carboxymethylaminomethyl (cmnm) group at the wobble position (U34) of certain tRNAs, forming tRNA-cmnm(5)s(2)U34. This is tRNA uridine 5-carboxymethylaminomethyl modification enzyme MnmG from Pseudomonas paraeruginosa (strain DSM 24068 / PA7) (Pseudomonas aeruginosa (strain PA7)).